The following is a 235-amino-acid chain: MSHSRLIIALDYPEAGPALALADRLSPERCALKVGKELFVAEGPQLVDALVRRGYRVFLDLKFHDIPNTVAGACRSAAATGAWMVNVHALGGAAMMAAAREALGETGDRPLLTAVTVLTSHSDATLREIGLAGPADAAVCRLAELARGAGVDGVVCSAREAALVRERCGDGFLRVTPGIRPAWAAKGDQARVLSPADAVAGGATHLVVGRPVTRADEPLAALARLERELAAQDET.

Residues aspartate 11, lysine 33, 60–69, threonine 119, arginine 180, glutamine 189, glycine 209, and arginine 210 contribute to the substrate site; that span reads DLKFHDIPNT. Lysine 62 acts as the Proton donor in catalysis.

This sequence belongs to the OMP decarboxylase family. Type 1 subfamily. Homodimer.

The enzyme catalyses orotidine 5'-phosphate + H(+) = UMP + CO2. It functions in the pathway pyrimidine metabolism; UMP biosynthesis via de novo pathway; UMP from orotate: step 2/2. Functionally, catalyzes the decarboxylation of orotidine 5'-monophosphate (OMP) to uridine 5'-monophosphate (UMP). The sequence is that of Orotidine 5'-phosphate decarboxylase from Alkalilimnicola ehrlichii (strain ATCC BAA-1101 / DSM 17681 / MLHE-1).